A 185-amino-acid polypeptide reads, in one-letter code: Ribosome maturation factor RimM (185 aa).

One can recognise a PRC barrel domain in the interval 106–185 (SGEYYWKDLL…IIEVDWDPGF (80 aa)).

The protein belongs to the RimM family. Binds ribosomal protein uS19.

It is found in the cytoplasm. Its function is as follows. An accessory protein needed during the final step in the assembly of 30S ribosomal subunit, possibly for assembly of the head region. Essential for efficient processing of 16S rRNA. May be needed both before and after RbfA during the maturation of 16S rRNA. It has affinity for free ribosomal 30S subunits but not for 70S ribosomes. The chain is Ribosome maturation factor RimM from Sodalis glossinidius (strain morsitans).